A 90-amino-acid polypeptide reads, in one-letter code: Bombyxin B-7 (90 aa).

The signal sequence occupies residues 1-20 (MMKTSVMLMLVVVISLMCSG). Intrachain disulfides connect Cys-30/Cys-76, Cys-42/Cys-89, and Cys-75/Cys-80. Residues 49-67 (GGAQYAPYFWTRQYLGSRG) constitute a propeptide, c peptide like.

Belongs to the insulin family. Heterodimer of a B chain and an A chain linked by two disulfide bonds.

It localises to the secreted. In terms of biological role, brain peptide responsible for activation of prothoracic glands to produce ecdysone in insects. The protein is Bombyxin B-7 (BBXB7) of Bombyx mori (Silk moth).